A 338-amino-acid chain; its full sequence is Putative transport protein TM_1349 (338 aa).

The next 7 membrane-spanning stretches (helical) occupy residues 20–40 (ILIS…IVLM), 68–88 (ALLL…PPVF), 147–167 (VSVT…VFYI), 203–223 (VIFI…EAFN), 239–259 (FIPI…SLTL), 263–283 (GVLL…VVFI), and 297–317 (IILS…FVGV).

The protein belongs to the autoinducer-2 exporter (AI-2E) (TC 2.A.86) family.

Its subcellular location is the cell membrane. The protein is Putative transport protein TM_1349 of Thermotoga maritima (strain ATCC 43589 / DSM 3109 / JCM 10099 / NBRC 100826 / MSB8).